Here is a 434-residue protein sequence, read N- to C-terminus: MVVKFTKSEALHKEALEHIVGGVNSPSRSFKAVGGGAPIAMERGKGAYFWDVDGNKYIDYLAAYGPIITGHAHPHITKAITTAAENGVLYGTPTALEVKFAKMLKEAMPALDKVRFVNSGTEAVMTTIRVARAYTGRTKIMKFAGCYHGHSDLVLVAAGSGPSTLGTPDSAGVPQSIAQEVITVPFNNVETLKEALDKWGHEVAAILVEPIVGNFGIVEPKPGFLEKVNELVHEAGALVIYDEVITAFRFMYGGAQDLLGVTPDLTALGKVIGGGLPIGAYGGKKEIMEQVAPLGPAYQAGTMAGNPASMASGIACLEVLQQEGLYEKLDELGAMLEKGILEQAAKHNIDITLNRLKGALTVYFTTNTIEDYDAAQDTDGEMFGKFFKLMLQEGVNLAPSKYEAWFLTTEHTKEDIEYTIEAVGRAFAALADNK.

K270 carries the N6-(pyridoxal phosphate)lysine modification.

It belongs to the class-III pyridoxal-phosphate-dependent aminotransferase family. HemL subfamily. As to quaternary structure, homodimer. Requires pyridoxal 5'-phosphate as cofactor.

The protein resides in the cytoplasm. It carries out the reaction (S)-4-amino-5-oxopentanoate = 5-aminolevulinate. It functions in the pathway porphyrin-containing compound metabolism; protoporphyrin-IX biosynthesis; 5-aminolevulinate from L-glutamyl-tRNA(Glu): step 2/2. This Bacillus anthracis (strain A0248) protein is Glutamate-1-semialdehyde 2,1-aminomutase 1.